The chain runs to 321 residues: Transaldolase (321 aa).

The active-site Schiff-base intermediate with substrate is the K132.

It belongs to the transaldolase family. Type 1 subfamily. In terms of assembly, homodimer.

The protein resides in the cytoplasm. It catalyses the reaction D-sedoheptulose 7-phosphate + D-glyceraldehyde 3-phosphate = D-erythrose 4-phosphate + beta-D-fructose 6-phosphate. It functions in the pathway carbohydrate degradation; pentose phosphate pathway; D-glyceraldehyde 3-phosphate and beta-D-fructose 6-phosphate from D-ribose 5-phosphate and D-xylulose 5-phosphate (non-oxidative stage): step 2/3. Transaldolase is important for the balance of metabolites in the pentose-phosphate pathway. This is Transaldolase from Marinobacter nauticus (strain ATCC 700491 / DSM 11845 / VT8) (Marinobacter aquaeolei).